We begin with the raw amino-acid sequence, 260 residues long: Putative ATP-binding protein BruAb2_1123 (260 aa).

Residues 5 to 228 (ISFNNVVMRY…DLPYPRTEAI (224 aa)) enclose the ABC transporter domain. 37–44 (GPSGCGKS) serves as a coordination point for ATP.

This sequence belongs to the ABC transporter superfamily. As to quaternary structure, the complex is composed of two ATP-binding proteins (BruAb2_1123), two transmembrane proteins (BruAb2_1124) and a solute-binding protein (BruAb2_1122).

It is found in the cell inner membrane. In terms of biological role, probably part of an ABC transporter complex. Probably Responsible for energy coupling to the transport system. This chain is Putative ATP-binding protein BruAb2_1123, found in Brucella abortus biovar 1 (strain 9-941).